A 320-amino-acid polypeptide reads, in one-letter code: Ferrochelatase (320 aa).

Fe cation contacts are provided by His-194 and Glu-275.

The protein belongs to the ferrochelatase family. Monomer.

It is found in the cytoplasm. The enzyme catalyses heme b + 2 H(+) = protoporphyrin IX + Fe(2+). Its pathway is porphyrin-containing compound metabolism; protoheme biosynthesis; protoheme from protoporphyrin-IX: step 1/1. Its function is as follows. Catalyzes the ferrous insertion into protoporphyrin IX. In Escherichia coli O9:H4 (strain HS), this protein is Ferrochelatase.